Consider the following 122-residue polypeptide: Nodulation protein NolR (122 aa).

The 95-residue stretch at 15–109 folds into the HTH arsR-type domain; sequence EKHEDAEIAA…ALSDIYGDDT (95 aa). The segment at residues 49 to 68 is a DNA-binding region (H-T-H motif); it reads VGALAHKVGLSQSALSQHLS.

Binds to the operator site in homodimeric form.

Functionally, negative transacting factor controlling the nod regulon. May control the expression of nodD1, nodD2, nodD3 and nodABC genes. The sequence is that of Nodulation protein NolR (nolR) from Rhizobium meliloti (Ensifer meliloti).